A 652-amino-acid polypeptide reads, in one-letter code: Engulfment and cell motility protein 3 (652 aa).

In terms of domain architecture, ELMO spans 307-479 (EQREQLQALR…VVREQLARTL (173 aa)).

In terms of assembly, probably interacts directly with the SH3-domain of DOCK1 via its SH3-binding site. Part of a complex with DOCK1 and RAC1. Interacts with ADGRB3.

Its subcellular location is the cytoplasm. Its function is as follows. Involved in cytoskeletal rearrangements required for phagocytosis of apoptotic cells and cell motility. Acts in association with DOCK1 and CRK. Was initially proposed to be required in complex with DOCK1 to activate Rac Rho small GTPases. May enhance the guanine nucleotide exchange factor (GEF) activity of DOCK1. The polypeptide is Engulfment and cell motility protein 3 (ELMO3) (Bos taurus (Bovine)).